We begin with the raw amino-acid sequence, 71 residues long: Dermaseptin-PT9 (71 aa).

The first 22 residues, 1-22 (MAFLKKSLFLVLFLGLVSLSIC), serve as a signal peptide directing secretion. Positions 23 to 43 (EEEKRENEMEQEDDEQSEMKR) are excised as a propeptide. V68 bears the Valine amide mark. Positions 69–71 (GEQ) are excised as a propeptide.

Belongs to the frog skin active peptide (FSAP) family. Dermaseptin subfamily. In terms of tissue distribution, expressed by the skin glands.

The protein localises to the secreted. It localises to the target cell membrane. Functionally, antimicrobial peptide with activity against fungi, Gram-positive and Gram-negative bacteria. Is active against S.aureus (MIC=16 uM), MRSA (MIC=32 uM), E.faecalis (MIC=16 uM), E.coli (MIC=8 uM), P.aeruginosa (MIC=16 uM), K.pneumoniae (MIC=8 uM), and C.albicans (MIC=64 uM). Also inhibits biofilm formation. Acts by disrupting cell membranes. Also exhibits anti-proliferative effect against various human cancer cells. Shows weak hemolytic activity towards horse erythrocytes. The chain is Dermaseptin-PT9 from Phyllomedusa tarsius (Brownbelly leaf frog).